We begin with the raw amino-acid sequence, 395 residues long: S-adenosylmethionine synthase (395 aa).

Residue H16 coordinates ATP. Mg(2+) is bound at residue D18. A K(+)-binding site is contributed by E44. The L-methionine site is built by E57 and Q100. A flexible loop region spans residues 100–110 (QSPDIAQGVDR). Residues 167–169 (DAK), 233–234 (RF), D242, 248–249 (RK), A265, and K269 contribute to the ATP site. D242 lines the L-methionine pocket. Residue K273 participates in L-methionine binding.

This sequence belongs to the AdoMet synthase family. As to quaternary structure, homotetramer; dimer of dimers. The cofactor is Mg(2+). Requires K(+) as cofactor.

The protein resides in the cytoplasm. The enzyme catalyses L-methionine + ATP + H2O = S-adenosyl-L-methionine + phosphate + diphosphate. The protein operates within amino-acid biosynthesis; S-adenosyl-L-methionine biosynthesis; S-adenosyl-L-methionine from L-methionine: step 1/1. Catalyzes the formation of S-adenosylmethionine (AdoMet) from methionine and ATP. The overall synthetic reaction is composed of two sequential steps, AdoMet formation and the subsequent tripolyphosphate hydrolysis which occurs prior to release of AdoMet from the enzyme. The sequence is that of S-adenosylmethionine synthase from Burkholderia mallei (strain NCTC 10247).